The sequence spans 274 residues: Tryptase beta-2 (274 aa).

Residues 1–19 (MLKLLLLLALSPLASLVHA) form the signal peptide. A propeptide spans 20–29 (APCPVKQRVG) (activation peptide). Residues 30–271 (IVGGREASES…YLDWIHRYVP (242 aa)) form the Peptidase S1 domain. Cys58 and Cys74 are oxidised to a cystine. His73 functions as the Charge relay system in the catalytic mechanism. A Phosphotyrosine modification is found at Tyr96. N-linked (GlcNAc...) asparagine glycosylation is present at Asn104. Asp120 acts as the Charge relay system in catalysis. Asn131 carries an N-linked (GlcNAc...) asparagine glycan. Cystine bridges form between Cys154–Cys229, Cys187–Cys210, and Cys219–Cys247. Ser223 acts as the Charge relay system in catalysis.

This sequence belongs to the peptidase S1 family. Tryptase subfamily. In terms of assembly, homotetramer. The active tetramer is converted to inactive monomers at neutral and acidic pH in the absence of heparin. Low concentrations of inactive monomers become active monomers at pH 6.0 in the presence of heparin. When the concentration of active monomers is higher, they convert to active monomers and then to active tetramers. These monomers are active and functionally distinct from the tetrameric enzyme. In contrast to the hidden active sites in the tetrameric form, the active site of the monomeric form is accessible for macromolecular proteins and inhibitors, e.g. fibrinogen which is a substrate for the monomeric but not for the tetrameric form. The monomeric form forms a complex with SERPINB6.

The protein localises to the secreted. The catalysed reaction is Preferential cleavage: Arg-|-Xaa, Lys-|-Xaa, but with more restricted specificity than trypsin.. Its function is as follows. Tryptase is the major neutral protease present in mast cells and is secreted upon the coupled activation-degranulation response of this cell type. Plays a role in innate immunity. This Rattus norvegicus (Rat) protein is Tryptase beta-2 (Tpsb2).